Consider the following 116-residue polypeptide: Phosphoribosyl-AMP cyclohydrolase (116 aa).

Asp-81 serves as a coordination point for Mg(2+). Residue Cys-82 participates in Zn(2+) binding. Mg(2+) contacts are provided by Asp-83 and Asp-85. Zn(2+) contacts are provided by Cys-98 and Cys-105.

It belongs to the PRA-CH family. As to quaternary structure, homodimer. Mg(2+) is required as a cofactor. It depends on Zn(2+) as a cofactor.

The protein localises to the cytoplasm. It catalyses the reaction 1-(5-phospho-beta-D-ribosyl)-5'-AMP + H2O = 1-(5-phospho-beta-D-ribosyl)-5-[(5-phospho-beta-D-ribosylamino)methylideneamino]imidazole-4-carboxamide. Its pathway is amino-acid biosynthesis; L-histidine biosynthesis; L-histidine from 5-phospho-alpha-D-ribose 1-diphosphate: step 3/9. Catalyzes the hydrolysis of the adenine ring of phosphoribosyl-AMP. This is Phosphoribosyl-AMP cyclohydrolase from Mycolicibacterium vanbaalenii (strain DSM 7251 / JCM 13017 / BCRC 16820 / KCTC 9966 / NRRL B-24157 / PYR-1) (Mycobacterium vanbaalenii).